The sequence spans 431 residues: Enolase (431 aa).

Glutamine 167 provides a ligand contact to (2R)-2-phosphoglycerate. Glutamate 209 (proton donor) is an active-site residue. Mg(2+) contacts are provided by aspartate 246, glutamate 289, and aspartate 316. The (2R)-2-phosphoglycerate site is built by lysine 341, arginine 370, serine 371, and lysine 392. The Proton acceptor role is filled by lysine 341.

Belongs to the enolase family. In terms of assembly, component of the RNA degradosome, a multiprotein complex involved in RNA processing and mRNA degradation. It depends on Mg(2+) as a cofactor.

Its subcellular location is the cytoplasm. It is found in the secreted. The protein resides in the cell surface. The enzyme catalyses (2R)-2-phosphoglycerate = phosphoenolpyruvate + H2O. It functions in the pathway carbohydrate degradation; glycolysis; pyruvate from D-glyceraldehyde 3-phosphate: step 4/5. Functionally, catalyzes the reversible conversion of 2-phosphoglycerate (2-PG) into phosphoenolpyruvate (PEP). It is essential for the degradation of carbohydrates via glycolysis. The polypeptide is Enolase (Chromohalobacter salexigens (strain ATCC BAA-138 / DSM 3043 / CIP 106854 / NCIMB 13768 / 1H11)).